The primary structure comprises 209 residues: Auxin-binding protein ABP19a (209 aa).

The signal sequence occupies residues 1–18 (MIFPIFFTFFLLLSSSHA). A disulfide bridge links C24 with C39. The region spanning 53-199 (SGLGIAGNTT…TTFLDAAQIK (147 aa)) is the Cupin type-1 domain. A glycan (N-linked (GlcNAc...) asparagine) is linked at N60. Residues H101, H103, E108, and H147 each coordinate Mn(2+).

Belongs to the germin family. Interacts with ABP20.

Its subcellular location is the secreted. The protein localises to the extracellular space. It is found in the apoplast. The protein resides in the cell wall. Functionally, probable receptor for the plant growth-promoting hormone auxin. The polypeptide is Auxin-binding protein ABP19a (ABP19A) (Prunus persica (Peach)).